A 192-amino-acid chain; its full sequence is Large ribosomal subunit protein bL9 (192 aa).

The interval 172-192 is disordered; the sequence is DALRPEDFFDPEADGIDEDEA. Acidic residues predominate over residues 179 to 192; it reads FFDPEADGIDEDEA.

Belongs to the bacterial ribosomal protein bL9 family.

In terms of biological role, binds to the 23S rRNA. This is Large ribosomal subunit protein bL9 from Rhizobium etli (strain CIAT 652).